The chain runs to 227 residues: Uracil-DNA glycosylase (227 aa).

Catalysis depends on Asp-65, which acts as the Proton acceptor.

This sequence belongs to the uracil-DNA glycosylase (UDG) superfamily. UNG family.

It localises to the cytoplasm. It carries out the reaction Hydrolyzes single-stranded DNA or mismatched double-stranded DNA and polynucleotides, releasing free uracil.. Functionally, excises uracil residues from the DNA which can arise as a result of misincorporation of dUMP residues by DNA polymerase or due to deamination of cytosine. The polypeptide is Uracil-DNA glycosylase (Lactobacillus delbrueckii subsp. bulgaricus (strain ATCC 11842 / DSM 20081 / BCRC 10696 / JCM 1002 / NBRC 13953 / NCIMB 11778 / NCTC 12712 / WDCM 00102 / Lb 14)).